A 355-amino-acid chain; its full sequence is CX3C chemokine receptor 1 (355 aa).

The Extracellular segment spans residues Met1–Thr31. Residues Val32 to Ser59 form a helical membrane-spanning segment. The Cytoplasmic segment spans residues Lys60–Tyr69. A helical membrane pass occupies residues Leu70 to Tyr90. The Extracellular segment spans residues Leu91–Lys103. Cys102 and Cys175 are joined by a disulfide. The chain crosses the membrane as a helical span at residues Phe104–Ile125. Topologically, residues Asp126–Thr142 are cytoplasmic. The helical transmembrane segment at Val143–Phe167 threads the bilayer. Over Thr168–Thr195 the chain is Extracellular. A helical membrane pass occupies residues Asn196 to Ile215. Topologically, residues Gln216–Lys231 are cytoplasmic. Residues Leu232–Leu256 traverse the membrane as a helical segment. The Extracellular portion of the chain corresponds to Lys257 to Leu273. The chain crosses the membrane as a helical span at residues Ala274–Gly297. Residues Glu298–Leu355 lie on the Cytoplasmic side of the membrane. Thr346 is modified (phosphothreonine).

The protein belongs to the G-protein coupled receptor 1 family. As to quaternary structure, found in a ternary complex with CX3CL1 and ITGAV:ITGB3 or ITGA4:ITGB1. In terms of assembly, (Microbial infection) Interacts with human respiratory syncytial virus (HRSV) protein G; this interaction modulates host immune response. (Microbial infection) Interacts with HIV-1 envelope polyprotein gp160. Post-translationally, this protein is not N-glycosylated which is unusual for G-protein-coupled receptors. Expressed in lymphoid and neural tissues. Expressed in lymphocyte subsets, such as natural killer (NK) cells, gamma-delta T-cells and terminally differentiated CD8(+) T-cells. Expressed in smooth muscle cells in atherosclerotic plaques.

It is found in the cell membrane. Receptor for the C-X3-C chemokine fractalkine (CX3CL1) present on many early leukocyte cells; CX3CR1-CX3CL1 signaling exerts distinct functions in different tissue compartments, such as immune response, inflammation, cell adhesion and chemotaxis. CX3CR1-CX3CL1 signaling mediates cell migratory functions. Responsible for the recruitment of natural killer (NK) cells to inflamed tissues. Acts as a regulator of inflammation process leading to atherogenesis by mediating macrophage and monocyte recruitment to inflamed atherosclerotic plaques, promoting cell survival. Involved in airway inflammation by promoting interleukin 2-producing T helper (Th2) cell survival in inflamed lung. Involved in the migration of circulating monocytes to non-inflamed tissues, where they differentiate into macrophages and dendritic cells. Acts as a negative regulator of angiogenesis, probably by promoting macrophage chemotaxis. Plays a key role in brain microglia by regulating inflammatory response in the central nervous system (CNS) and regulating synapse maturation. Required to restrain the microglial inflammatory response in the CNS and the resulting parenchymal damage in response to pathological stimuli. Involved in brain development by participating in synaptic pruning, a natural process during which brain microglia eliminates extra synapses during postnatal development. Synaptic pruning by microglia is required to promote the maturation of circuit connectivity during brain development. Acts as an important regulator of the gut microbiota by controlling immunity to intestinal bacteria and fungi. Expressed in lamina propria dendritic cells in the small intestine, which form transepithelial dendrites capable of taking up bacteria in order to provide defense against pathogenic bacteria. Required to initiate innate and adaptive immune responses against dissemination of commensal fungi (mycobiota) component of the gut: expressed in mononuclear phagocytes (MNPs) and acts by promoting induction of antifungal IgG antibodies response to confer protection against disseminated C.albicans or C.auris infection. Also acts as a receptor for C-C motif chemokine CCL26, inducing cell chemotaxis. In terms of biological role, (Microbial infection) Acts as a coreceptor with CD4 for HIV-1 virus envelope protein. Functionally, (Microbial infection) Acts as a coreceptor with CD4 for HIV-1 virus envelope protein. May have more potent HIV-1 coreceptothr activity than isoform 1. Its function is as follows. (Microbial infection) Acts as a coreceptor with CD4 for HIV-1 virus envelope protein. May have more potent HIV-1 coreceptor activity than isoform 1. This is CX3C chemokine receptor 1 from Homo sapiens (Human).